Consider the following 333-residue polypeptide: Probable xyloglucan endotransglucosylase/hydrolase protein 27 (333 aa).

An N-terminal signal peptide occupies residues 1-20 (METLSRLLVFMSLFSGLVSG). The 203-residue stretch at 21–223 (FALQNLPITS…YKYAPYIARF (203 aa)) folds into the GH16 domain. The active-site Nucleophile is E108. The active-site Proton donor is the E112. Xyloglucan contacts are provided by residues E112 and 125-127 (QTN). An N-linked (GlcNAc...) asparagine glycan is attached at N131. Residues 135-139 (HSGRE), 202-203 (KW), G207, and R282 contribute to the xyloglucan site. C277 and C290 form a disulfide bridge. The disordered stretch occupies residues 311–333 (IPRRHRNGKHRSKRSRVDGTESI). Basic residues predominate over residues 312–324 (PRRHRNGKHRSKR).

The protein belongs to the glycosyl hydrolase 16 family. XTH group 3 subfamily. Post-translationally, contains at least one intrachain disulfide bond essential for its enzymatic activity. Expressed in 7 day old seedlings, roots, hypocotyls, rosette leaves, internodes between nodes bearing axillary shoots, nodes bearing flowers, flower buds, anthers and siliques.

It is found in the secreted. The protein resides in the cell wall. It localises to the extracellular space. The protein localises to the apoplast. It carries out the reaction breaks a beta-(1-&gt;4) bond in the backbone of a xyloglucan and transfers the xyloglucanyl segment on to O-4 of the non-reducing terminal glucose residue of an acceptor, which can be a xyloglucan or an oligosaccharide of xyloglucan.. Its function is as follows. Catalyzes xyloglucan endohydrolysis (XEH) and/or endotransglycosylation (XET). Cleaves and religates xyloglucan polymers, an essential constituent of the primary cell wall, and thereby participates in cell wall construction of growing tissues. Required for cell wall modification during the development of tracheary elements. The polypeptide is Probable xyloglucan endotransglucosylase/hydrolase protein 27 (XTH27) (Arabidopsis thaliana (Mouse-ear cress)).